The following is a 1935-amino-acid chain: Myosin-7 (1935 aa).

Residues 32-81 enclose the Myosin N-terminal SH3-like domain; it reads DLKKDVFVPDDKEEFVKATILSREGGKVTAETEHGKTVTVKEDQVLQQNP. Residues 85-778 form the Myosin motor domain; it reads DKIEDMAMLT…LLGLLEEMRD (694 aa). Position 129 is an N6,N6,N6-trimethyllysine (K129). 178–185 provides a ligand contact to ATP; it reads GESGAGKT. Phosphothreonine is present on T378. 2 actin-binding regions span residues 655–677 and 757–771; these read LNKL…IPNE and KFGH…GLLG. The region spanning 781–810 is the IQ domain; the sequence is LSRIITRIQAQSRGVLSRMEFKKLLERRDS. Positions 839–1935 form a coiled coil; it reads LLKSAETEKE…DIGTKGLNEE (1097 aa). A phosphoserine mark is found at S1137 and S1269. The residue at position 1282 (T1282) is a Phosphothreonine. Position 1308 is a phosphotyrosine (Y1308). T1309 is subject to Phosphothreonine. S1510 carries the post-translational modification Phosphoserine. T1513 carries the post-translational modification Phosphothreonine. Residues 1907-1935 are disordered; the sequence is EERADIAESQVNKLRAKSRDIGTKGLNEE. Basic and acidic residues predominate over residues 1923–1935; sequence KSRDIGTKGLNEE.

The protein belongs to the TRAFAC class myosin-kinesin ATPase superfamily. Myosin family. Muscle myosin is a hexameric protein that consists of 2 heavy chain subunits (MHC), 2 alkali light chain subunits (MLC) and 2 regulatory light chain subunits (MLC-2). Interacts with ECPAS. Interacts (via C-terminus) with LRRC39.

The protein localises to the cytoplasm. Its subcellular location is the myofibril. It is found in the sarcomere. Myosins are actin-based motor molecules with ATPase activity essential for muscle contraction. Forms regular bipolar thick filaments that, together with actin thin filaments, constitute the fundamental contractile unit of skeletal and cardiac muscle. This Bos taurus (Bovine) protein is Myosin-7 (MYH7).